The sequence spans 102 residues: EPIDERMAL PATTERNING FACTOR-like protein 9 (102 aa).

Positions 1–31 are cleaved as a signal peptide; it reads MKHEMMNIKPRCITIFFLLFALLLGNYVVQA. Disulfide bonds link Cys-65-Cys-98, Cys-70-Cys-77, and Cys-73-Cys-100.

Belongs to the plant cysteine rich small secretory peptide family. Epidermal patterning factor subfamily. In terms of assembly, interacts with ERECTA and TMM. Expressed in immature organs, including leaves, stems and flower buds, but not in roots, shoot apical meristem and petals. Detected in the mesophyll tissues but not in the epidermal tissues where stomata develop.

The protein localises to the secreted. It localises to the extracellular space. The protein resides in the apoplast. Functionally, positively regulates stomatal density and patterning. Acts by competing with EPF2 (AC Q8LC53) for the same receptors, ERECTA (AC Q42371) and TMM (AC Q9SSD1). Not cleaved by the protease CRSP (AC Q9LNU1). The protein is EPIDERMAL PATTERNING FACTOR-like protein 9 of Arabidopsis thaliana (Mouse-ear cress).